The chain runs to 407 residues: Putative aspartate aminotransferase, cytoplasmic 2 (407 aa).

K249 is modified (N6-(pyridoxal phosphate)lysine).

The protein belongs to the class-I pyridoxal-phosphate-dependent aminotransferase family. Homodimer. Requires pyridoxal 5'-phosphate as cofactor.

It is found in the cytoplasm. It carries out the reaction L-aspartate + 2-oxoglutarate = oxaloacetate + L-glutamate. This chain is Putative aspartate aminotransferase, cytoplasmic 2 (GOT1L1), found in Bos taurus (Bovine).